We begin with the raw amino-acid sequence, 218 residues long: Pyrrolidone-carboxylate peptidase (218 aa).

Active-site residues include Glu-81, Cys-144, and His-169.

It belongs to the peptidase C15 family. As to quaternary structure, homotetramer.

The protein resides in the cytoplasm. It catalyses the reaction Release of an N-terminal pyroglutamyl group from a polypeptide, the second amino acid generally not being Pro.. In terms of biological role, removes 5-oxoproline from various penultimate amino acid residues except L-proline. The chain is Pyrrolidone-carboxylate peptidase (pcp) from Deinococcus radiodurans (strain ATCC 13939 / DSM 20539 / JCM 16871 / CCUG 27074 / LMG 4051 / NBRC 15346 / NCIMB 9279 / VKM B-1422 / R1).